The primary structure comprises 315 residues: Ribosomal RNA small subunit methyltransferase H (315 aa).

Residues 37–39 (GGH), D57, F83, D105, and Q112 each bind S-adenosyl-L-methionine.

This sequence belongs to the methyltransferase superfamily. RsmH family.

It localises to the cytoplasm. It carries out the reaction cytidine(1402) in 16S rRNA + S-adenosyl-L-methionine = N(4)-methylcytidine(1402) in 16S rRNA + S-adenosyl-L-homocysteine + H(+). Functionally, specifically methylates the N4 position of cytidine in position 1402 (C1402) of 16S rRNA. The chain is Ribosomal RNA small subunit methyltransferase H from Pseudomonas fluorescens (strain ATCC BAA-477 / NRRL B-23932 / Pf-5).